Here is a 233-residue protein sequence, read N- to C-terminus: Small ribosomal subunit protein uS2 (233 aa).

This sequence belongs to the universal ribosomal protein uS2 family.

This Clostridium perfringens (strain ATCC 13124 / DSM 756 / JCM 1290 / NCIMB 6125 / NCTC 8237 / Type A) protein is Small ribosomal subunit protein uS2.